A 249-amino-acid polypeptide reads, in one-letter code: Type III pantothenate kinase (249 aa).

Position 6–13 (6–13 (DCGNSFIK)) interacts with ATP. Residues tyrosine 93 and 100–103 (GMDR) contribute to the substrate site. Aspartate 102 serves as the catalytic Proton acceptor. Aspartate 122 contributes to the K(+) binding site. Threonine 125 contacts ATP. Position 181 (threonine 181) interacts with substrate.

The protein belongs to the type III pantothenate kinase family. As to quaternary structure, homodimer. NH4(+) is required as a cofactor. It depends on K(+) as a cofactor.

The protein localises to the cytoplasm. It carries out the reaction (R)-pantothenate + ATP = (R)-4'-phosphopantothenate + ADP + H(+). The protein operates within cofactor biosynthesis; coenzyme A biosynthesis; CoA from (R)-pantothenate: step 1/5. In terms of biological role, catalyzes the phosphorylation of pantothenate (Pan), the first step in CoA biosynthesis. The polypeptide is Type III pantothenate kinase (Pseudomonas putida (strain ATCC 47054 / DSM 6125 / CFBP 8728 / NCIMB 11950 / KT2440)).